The sequence spans 342 residues: Deoxyhypusine synthase regulatory subunit (342 aa).

NAD(+) is bound by residues 72–76 (SNLIS), 98–100 (TAG), E104, D213, 282–283 (TG), and 316–317 (DA).

The protein belongs to the deoxyhypusine synthase family. Heterotetramer formed by a homodimer of the non-catalytic regulatory subunit DHSp and a homodimer of the catalytic subunit DHSc where DHSc appears to bind spermidine and DHSp appears to bind NAD(+).

The protein operates within protein modification; eIF5A hypusination. Functionally, required for the activation and stability of deoxyhypusine synthase DHSc. Required for cell growth and survival. The sequence is that of Deoxyhypusine synthase regulatory subunit from Trypanosoma brucei brucei (strain 927/4 GUTat10.1).